Reading from the N-terminus, the 280-residue chain is 2,3,4,5-tetrahydropyridine-2,6-dicarboxylate N-succinyltransferase (280 aa).

Belongs to the transferase hexapeptide repeat family.

It localises to the cytoplasm. It carries out the reaction (S)-2,3,4,5-tetrahydrodipicolinate + succinyl-CoA + H2O = (S)-2-succinylamino-6-oxoheptanedioate + CoA. The protein operates within amino-acid biosynthesis; L-lysine biosynthesis via DAP pathway; LL-2,6-diaminopimelate from (S)-tetrahydrodipicolinate (succinylase route): step 1/3. This chain is 2,3,4,5-tetrahydropyridine-2,6-dicarboxylate N-succinyltransferase, found in Methylorubrum extorquens (strain PA1) (Methylobacterium extorquens).